A 150-amino-acid chain; its full sequence is 3-dehydroquinate dehydratase (150 aa).

Catalysis depends on tyrosine 23, which acts as the Proton acceptor. Residues asparagine 79, histidine 85, and aspartate 92 each coordinate substrate. Residue histidine 105 is the Proton donor of the active site. Substrate is bound by residues 106-107 (IS) and arginine 116.

The protein belongs to the type-II 3-dehydroquinase family. Homododecamer.

It catalyses the reaction 3-dehydroquinate = 3-dehydroshikimate + H2O. It participates in metabolic intermediate biosynthesis; chorismate biosynthesis; chorismate from D-erythrose 4-phosphate and phosphoenolpyruvate: step 3/7. Functionally, catalyzes a trans-dehydration via an enolate intermediate. The protein is 3-dehydroquinate dehydratase of Marinomonas sp. (strain MWYL1).